We begin with the raw amino-acid sequence, 422 residues long: Zinc finger protein Gfi-1 (422 aa).

The interval Met1–Ser20 is SNAG domain. The segment at Met1–Leu109 is disordered. 2 positions are modified to phosphoserine: Ser20 and Ser56. Residues Arg140–Cys257 are required for interaction with RELA. C2H2-type zinc fingers lie at residues Tyr255–His278, Phe284–His306, Phe312–His334, Tyr340–His362, His368–His390, and Phe396–His419.

In terms of assembly, interacts with U2AF1L4. Component of RCOR-GFI-KDM1A-HDAC complexes. Interacts directly with RCOR1, KDM1A and HDAC2. Also interacts with HDAC1. Interacts (via the zinc-finger domain) with ARIH2; the interaction prevents GFI1 ubiquitination and proteasomal degradation. Interacts with PIAS3; the interaction relieves the inhibitory effect of PIAS3 on STAT3-mediated transcriptional activity. Forms a complex with EHMT2 and HDAC1 to promote 'Lys-9' dimethylation of H3 (H3K9Me2) and repress expression of target genes. Interacts directly with EHMT2. Component of the GFI1-AJUBA-HDAC1 repressor complex. Interacts directly with AJUBA (via ITS LIM domains); the interaction results in the HDAC-dependent corepression of a subset of GFI1 target genes and, occurs independently of the SNAG domain. Interacts with SPI1; the interaction inhibits SPI1 transcriptional activity targeted at macrophage-specific genes, repressing macrophage differentiation of myeloid progenitor cells and promoting granulocyte commitment. Interacts with RUNX1T1; the interaction represses HDAC-mediated transcriptional activity. Interacts with RELA; the interaction occurs on liposaccharide (LPS) stimulation and controls RELA DNA binding activity and regulates endotoxin-mediated TOLL-like receptor inflammatory response. Interacts (via the C-terminal zinc fingers) with ZBTB17; the interaction results in the recruitment of GFI1 to the CDKN1A/p21 and CDKN1B promoters and repression of transcription. Ubiquitinated. Ubiquitination and degradation by the proteasome is inhibited by the ubiquitin ligase, ARIH2.

Its subcellular location is the nucleus. In terms of biological role, transcription repressor essential for hematopoiesis. Functions in a cell-context and development-specific manner. Binds to 5'-TAAATCAC[AT]GCA-3' in the promoter region of a large number of genes. Component of several complexes, including the EHMT2-GFI1-HDAC1, AJUBA-GFI1-HDAC1 and RCOR-GFI-KDM1A-HDAC complexes, that suppress, via histone deacetylase (HDAC) recruitment, a number of genes implicated in multilineage blood cell development. Regulates neutrophil differentiation, promotes proliferation of lymphoid cells, and is required for granulocyte development. Inhibits SPI1 transcriptional activity at macrophage-specific genes, repressing macrophage differentiation of myeloid progenitor cells and promoting granulocyte commitment. Mediates, together with U2AF1L4, the alternative splicing of CD45 and controls T-cell receptor signaling. Regulates the endotoxin-mediated Toll-like receptor (TLR) inflammatory response by antagonizing RELA. Cooperates with CBFA2T2 to regulate ITGB1-dependent neurite growth. Controls cell-cycle progression by repressing CDKNIA/p21 transcription in response to TGFB1 via recruitment of GFI1 by ZBTB17 to the CDKNIA/p21 and CDKNIB promoters. Required for the maintenance of inner ear hair cells. In addition to its role in transcription, acts as a substrate adapter for PRMT1 in the DNA damage response: facilitates the recognition of TP53BP1 and MRE11 substrates by PRMT1, promoting their methylation and the DNA damage response. The protein is Zinc finger protein Gfi-1 (GFI1) of Homo sapiens (Human).